The sequence spans 65 residues: DNA-directed RNA polymerase subunit Rpo10 (65 aa).

4 residues coordinate Zn(2+): cysteine 7, cysteine 10, cysteine 44, and cysteine 45.

The protein belongs to the archaeal Rpo10/eukaryotic RPB10 RNA polymerase subunit family. In terms of assembly, part of the RNA polymerase complex. Requires Zn(2+) as cofactor.

Its subcellular location is the cytoplasm. The enzyme catalyses RNA(n) + a ribonucleoside 5'-triphosphate = RNA(n+1) + diphosphate. Its function is as follows. DNA-dependent RNA polymerase (RNAP) catalyzes the transcription of DNA into RNA using the four ribonucleoside triphosphates as substrates. In Thermococcus onnurineus (strain NA1), this protein is DNA-directed RNA polymerase subunit Rpo10.